Here is a 539-residue protein sequence, read N- to C-terminus: Hydroxylamine reductase (539 aa).

Residues cysteine 3, cysteine 6, cysteine 14, and cysteine 20 each coordinate [4Fe-4S] cluster. 8 residues coordinate hybrid [4Fe-2O-2S] cluster: histidine 232, glutamate 256, cysteine 300, cysteine 392, cysteine 420, cysteine 445, glutamate 480, and lysine 482. Cysteine persulfide is present on cysteine 392.

Belongs to the HCP family. It depends on [4Fe-4S] cluster as a cofactor. Hybrid [4Fe-2O-2S] cluster serves as cofactor.

It localises to the cytoplasm. It catalyses the reaction A + NH4(+) + H2O = hydroxylamine + AH2 + H(+). In terms of biological role, catalyzes the reduction of hydroxylamine to form NH(3) and H(2)O. The chain is Hydroxylamine reductase from Chlorobaculum tepidum (strain ATCC 49652 / DSM 12025 / NBRC 103806 / TLS) (Chlorobium tepidum).